A 503-amino-acid chain; its full sequence is 26S proteasome non-ATPase regulatory subunit 5 (503 aa).

A2 is modified (N-acetylalanine).

It belongs to the proteasome subunit S5B/HSM3 family. Interacts with PSMC1, PSMC2, PSMD1 and PSMD6. Part of transient complex containing PSMD5, PSMC2, PSMC1 and PSMD2 formed during the assembly of the 26S proteasome.

In terms of biological role, acts as a chaperone during the assembly of the 26S proteasome, specifically of the base subcomplex of the PA700/19S regulatory complex (RC). In the initial step of the base subcomplex assembly is part of an intermediate PSMD5:PSMC2:PSMC1:PSMD2 module which probably assembles with a PSMD10:PSMC4:PSMC5:PAAF1 module followed by dissociation of PSMD5. This Bos taurus (Bovine) protein is 26S proteasome non-ATPase regulatory subunit 5 (PSMD5).